We begin with the raw amino-acid sequence, 115 residues long: Large ribosomal subunit protein bL19 (115 aa).

Belongs to the bacterial ribosomal protein bL19 family.

Functionally, this protein is located at the 30S-50S ribosomal subunit interface and may play a role in the structure and function of the aminoacyl-tRNA binding site. The chain is Large ribosomal subunit protein bL19 from Bacillus licheniformis (strain ATCC 14580 / DSM 13 / JCM 2505 / CCUG 7422 / NBRC 12200 / NCIMB 9375 / NCTC 10341 / NRRL NRS-1264 / Gibson 46).